Reading from the N-terminus, the 553-residue chain is Glycerol kinase 3 (553 aa).

Thr-20 contributes to the substrate binding site. An ATP-binding site is contributed by Arg-24. 3 residues coordinate substrate: Arg-94, Tyr-148, and Asp-259. ATP-binding positions include Thr-281, Gly-326, and 427 to 431; that span reads GMTSN.

Belongs to the FGGY kinase family.

It localises to the mitochondrion outer membrane. Its subcellular location is the cytoplasm. It catalyses the reaction glycerol + ATP = sn-glycerol 3-phosphate + ADP + H(+). It functions in the pathway polyol metabolism; glycerol degradation via glycerol kinase pathway; sn-glycerol 3-phosphate from glycerol: step 1/1. Its function is as follows. May be involved in the regulation of glycerol uptake and metabolism. In Homo sapiens (Human), this protein is Glycerol kinase 3.